The chain runs to 202 residues: Probable chemoreceptor glutamine deamidase CheD 2 (202 aa).

The protein belongs to the CheD family.

It catalyses the reaction L-glutaminyl-[protein] + H2O = L-glutamyl-[protein] + NH4(+). Its function is as follows. Probably deamidates glutamine residues to glutamate on methyl-accepting chemotaxis receptors (MCPs), playing an important role in chemotaxis. This Shewanella oneidensis (strain ATCC 700550 / JCM 31522 / CIP 106686 / LMG 19005 / NCIMB 14063 / MR-1) protein is Probable chemoreceptor glutamine deamidase CheD 2.